The primary structure comprises 307 residues: Coproporphyrin III ferrochelatase (307 aa).

Residues Y12, R29, 45-46, S53, and Y124 each bind Fe-coproporphyrin III; that span reads RY. Fe(2+) contacts are provided by H181 and E263.

It belongs to the ferrochelatase family.

Its subcellular location is the cytoplasm. It carries out the reaction Fe-coproporphyrin III + 2 H(+) = coproporphyrin III + Fe(2+). The protein operates within porphyrin-containing compound metabolism; protoheme biosynthesis. Its function is as follows. Involved in coproporphyrin-dependent heme b biosynthesis. Catalyzes the insertion of ferrous iron into coproporphyrin III to form Fe-coproporphyrin III. This Staphylococcus epidermidis (strain ATCC 35984 / DSM 28319 / BCRC 17069 / CCUG 31568 / BM 3577 / RP62A) protein is Coproporphyrin III ferrochelatase.